The primary structure comprises 92 residues: Alpha-conotoxin-like Mi20.1 (92 aa).

The N-terminal stretch at 1–24 (MPKLEMMLLVLLILPLSSFSAAGE) is a signal peptide. A propeptide spanning residues 25–45 (QVVQGDRRSDGLARYLQRGGR) is cleaved from the precursor. Residue E49 is modified to 4-carboxyglutamate. Position 55 is a 4-hydroxyproline (P55). Intrachain disulfides connect C63–C72, C68–C80, C73–C90, and C78–C92.

This sequence belongs to the conotoxin D superfamily. Hetero-, homo- or pseudo-homodimer (identical sequence, different post-translational modifications). One pseudo-homodimer of [carboxyGlu-49, hydroxyPro-55]Ml20.1 and [carboxyGlu-49, hydroxyPro-55, hydroxyPro-70]Ml20.1 may exist. In terms of tissue distribution, expressed by the venom duct.

Its subcellular location is the secreted. In terms of biological role, alpha-conotoxins act on postsynaptic membranes, they bind to the nicotinic acetylcholine receptors (nAChR) and thus inhibit them. Through its two C-terminal domains, this homodimeric protein would bind to two nAChR allosteric sites, located outside the nAChR C-loop of the principal binding face and at the adjacent binding interface in a clockwise direction. This toxin specifically blocks mammalian neuronal nAChR of the alpha-7/CHRNA7, alpha-3-beta-2/CHRNA3-CHRNB2 and alpha-4-beta-2/CHRNA4-CHRNB2 subtypes. The polypeptide is Alpha-conotoxin-like Mi20.1 (Conus miles (Soldier cone)).